The following is a 372-amino-acid chain: UDP-N-acetylglucosamine--N-acetylmuramyl-(pentapeptide) pyrophosphoryl-undecaprenol N-acetylglucosamine transferase (372 aa).

UDP-N-acetyl-alpha-D-glucosamine contacts are provided by residues 15–17, asparagine 126, arginine 169, serine 197, and glutamine 299; that span reads TGG.

The protein belongs to the glycosyltransferase 28 family. MurG subfamily.

It localises to the cell inner membrane. It catalyses the reaction di-trans,octa-cis-undecaprenyl diphospho-N-acetyl-alpha-D-muramoyl-L-alanyl-D-glutamyl-meso-2,6-diaminopimeloyl-D-alanyl-D-alanine + UDP-N-acetyl-alpha-D-glucosamine = di-trans,octa-cis-undecaprenyl diphospho-[N-acetyl-alpha-D-glucosaminyl-(1-&gt;4)]-N-acetyl-alpha-D-muramoyl-L-alanyl-D-glutamyl-meso-2,6-diaminopimeloyl-D-alanyl-D-alanine + UDP + H(+). It participates in cell wall biogenesis; peptidoglycan biosynthesis. Functionally, cell wall formation. Catalyzes the transfer of a GlcNAc subunit on undecaprenyl-pyrophosphoryl-MurNAc-pentapeptide (lipid intermediate I) to form undecaprenyl-pyrophosphoryl-MurNAc-(pentapeptide)GlcNAc (lipid intermediate II). The protein is UDP-N-acetylglucosamine--N-acetylmuramyl-(pentapeptide) pyrophosphoryl-undecaprenol N-acetylglucosamine transferase of Methylobacterium sp. (strain 4-46).